The sequence spans 64 residues: Large ribosomal subunit protein bL35 (64 aa).

The protein belongs to the bacterial ribosomal protein bL35 family.

This Coxiella burnetii (strain RSA 331 / Henzerling II) protein is Large ribosomal subunit protein bL35.